Consider the following 174-residue polypeptide: Shikimate kinase 2 (174 aa).

12-17 (GCGKTT) lines the ATP pocket. Mg(2+) is bound by residues threonine 16 and aspartate 32. Residues aspartate 34, arginine 58, and glycine 79 each coordinate substrate. The segment at 112 to 126 (EAYPLADQRPTLTGR) is LID domain. Arginine 120 lines the ATP pocket. Residue arginine 139 coordinates substrate. Glutamine 155 is a binding site for ATP.

This sequence belongs to the shikimate kinase family. AroL subfamily. In terms of assembly, monomer. It depends on Mg(2+) as a cofactor.

Its subcellular location is the cytoplasm. The catalysed reaction is shikimate + ATP = 3-phosphoshikimate + ADP + H(+). It functions in the pathway metabolic intermediate biosynthesis; chorismate biosynthesis; chorismate from D-erythrose 4-phosphate and phosphoenolpyruvate: step 5/7. In terms of biological role, catalyzes the specific phosphorylation of the 3-hydroxyl group of shikimic acid using ATP as a cosubstrate. This chain is Shikimate kinase 2, found in Erwinia tasmaniensis (strain DSM 17950 / CFBP 7177 / CIP 109463 / NCPPB 4357 / Et1/99).